The following is a 403-amino-acid chain: NADH-quinone oxidoreductase subunit D (403 aa).

Belongs to the complex I 49 kDa subunit family. As to quaternary structure, NDH-1 is composed of 14 different subunits. Subunits NuoB, C, D, E, F, and G constitute the peripheral sector of the complex.

It is found in the cell membrane. The enzyme catalyses a quinone + NADH + 5 H(+)(in) = a quinol + NAD(+) + 4 H(+)(out). In terms of biological role, NDH-1 shuttles electrons from NADH, via FMN and iron-sulfur (Fe-S) centers, to quinones in the respiratory chain. The immediate electron acceptor for the enzyme in this species is believed to be a menaquinone. Couples the redox reaction to proton translocation (for every two electrons transferred, four hydrogen ions are translocated across the cytoplasmic membrane), and thus conserves the redox energy in a proton gradient. The chain is NADH-quinone oxidoreductase subunit D from Amoebophilus asiaticus (strain 5a2).